The sequence spans 378 residues: Probable E3 ubiquitin-protein ligase LUL3 (378 aa).

The span at 1 to 21 (MGISLSKRRRDNNNNHHHPHH) shows a compositional bias: basic residues. Residues 1 to 79 (MGISLSKRRR…PPSQISYRPY (79 aa)) form a disordered region. G2 is lipidated: N-myristoyl glycine. 2 stretches are compositionally biased toward pro residues: residues 29 to 38 (DPPPQQPPPQ) and 55 to 72 (SLPPPPAQPPSSSQPPPS). The interval 164–283 (FVFDALFDGS…GSFKVKVMKQ (120 aa)) is DAR2 domain. An RING-type; atypical zinc finger spans residues 321-360 (CVICLTEPKDTAVMPCRHLCLCSDCAEELRFQTNKCPICR).

It belongs to the RING-type zinc finger family. LOG2 subfamily. In terms of processing, myristoylated (in vitro).

The enzyme catalyses S-ubiquitinyl-[E2 ubiquitin-conjugating enzyme]-L-cysteine + [acceptor protein]-L-lysine = [E2 ubiquitin-conjugating enzyme]-L-cysteine + N(6)-ubiquitinyl-[acceptor protein]-L-lysine.. The protein operates within protein modification; protein ubiquitination. Functionally, acts as an E3 ubiquitin-protein ligase, or as part of E3 complex, which accepts ubiquitin from specific E2 ubiquitin-conjugating enzymes and then transfers it to substrates (in vitro). In Arabidopsis thaliana (Mouse-ear cress), this protein is Probable E3 ubiquitin-protein ligase LUL3 (LUL3).